We begin with the raw amino-acid sequence, 334 residues long: tRNA-cytidine(32) 2-sulfurtransferase (334 aa).

The PP-loop motif signature appears at 74-79 (SGGKDS). Cysteine 149, cysteine 152, and cysteine 240 together coordinate [4Fe-4S] cluster.

The protein belongs to the TtcA family. In terms of assembly, homodimer. The cofactor is Mg(2+). Requires [4Fe-4S] cluster as cofactor.

The protein resides in the cytoplasm. It carries out the reaction cytidine(32) in tRNA + S-sulfanyl-L-cysteinyl-[cysteine desulfurase] + AH2 + ATP = 2-thiocytidine(32) in tRNA + L-cysteinyl-[cysteine desulfurase] + A + AMP + diphosphate + H(+). The protein operates within tRNA modification. Functionally, catalyzes the ATP-dependent 2-thiolation of cytidine in position 32 of tRNA, to form 2-thiocytidine (s(2)C32). The sulfur atoms are provided by the cysteine/cysteine desulfurase (IscS) system. In Burkholderia ambifaria (strain ATCC BAA-244 / DSM 16087 / CCUG 44356 / LMG 19182 / AMMD) (Burkholderia cepacia (strain AMMD)), this protein is tRNA-cytidine(32) 2-sulfurtransferase.